A 924-amino-acid polypeptide reads, in one-letter code: Aminopeptidase 2 (924 aa).

The signal sequence occupies residues 1–45; that stretch reads MASNNTSQRSGFSSFFCRLKTYFCNHFLCLFVLSFFPLSFRRLCL. Positions 46–57 are excised as a propeptide; it reads LCHLCEKSNLWL. Serine 58 bears the N-acetylserine; partial mark. N-linked (GlcNAc...) asparagine glycosylation occurs at asparagine 92. Substrate is bound at residue glutamate 194. An N-linked (GlcNAc...) asparagine glycan is attached at asparagine 229. 327–331 lines the substrate pocket; the sequence is GAMEN. Histidine 363 is a binding site for Zn(2+). The active-site Proton acceptor is the glutamate 364. Zn(2+) is bound by residues histidine 367 and glutamate 386.

This sequence belongs to the peptidase M1 family. The cofactor is Zn(2+).

It is found in the secreted. Its subcellular location is the cell wall. Its activity is regulated as follows. Inactivated by metal-chelating agents phenanthroline and EDTA. Inhibited by bestatin, an aminopeptidase inhibitor. Not inhibited by pepstatin A and PMSF, inhibitors of aspartic and the serine proteases, respectively. Not inhibited by carboxypeptidase inhibitor. Its function is as follows. Metalloprotease that specifically hydrolyzes peptides with N-terminal alanine, arginine and leucine residues. The sequence is that of Aminopeptidase 2 (APE2) from Candida albicans (strain SC5314 / ATCC MYA-2876) (Yeast).